A 254-amino-acid polypeptide reads, in one-letter code: MDKGKSVKSTEKSVGIPPKTPKTDNNAHVDNEFLILQVNDAVFPIGSYTHSFGLETYIQQKKVTNKESALEYLKANLSSQFLYTEMLSLKLTYESTLQQNLKKILGVEEVIMLSTSPMELRLANQKLGNRFIKTLQAMNELDMGAFFNAYAQQTKDPTHATSYGVFAASLNMELKKALRHYLYAQTSNMVINCVKSVPLSQNDGQKILLSLQSPFNQLIEKTLELDESHLCAASVQNDIKAMQHESLYSRLYMS.

A compositionally biased stretch (basic and acidic residues) spans Met1–Glu11. The disordered stretch occupies residues Met1–Asn25.

This sequence belongs to the UreF family. As to quaternary structure, ureH, UreF and UreG form a complex that acts as a GTP-hydrolysis-dependent molecular chaperone, activating the urease apoprotein by helping to assemble the nickel containing metallocenter of UreC. The UreE protein probably delivers the nickel.

It localises to the cytoplasm. Required for maturation of urease via the functional incorporation of the urease nickel metallocenter. The chain is Urease accessory protein UreF from Helicobacter pylori (strain P12).